Consider the following 484-residue polypeptide: GDP-mannose transporter (484 aa).

Composition is skewed to basic and acidic residues over residues 1-12 and 19-28; these read MSMTTSRERNVP and ELGRSRHSDV. A disordered region spans residues 1 to 34; it reads MSMTTSRERNVPPDDNEIELGRSRHSDVAPESES. The Cytoplasmic segment spans residues 1 to 60; sequence MSMTTSRERNVPPDDNEIELGRSRHSDVAPESESPQAHLLNSDVASVTKNFMRNASHATA. The helical transmembrane segment at 61–81 threads the bilayer; sequence NSGAIAAVLSYCIASISMTVI. Residues 82–90 lie on the Lumenal side of the membrane; that stretch reads NKFTVSGEK. Residues 91-111 traverse the membrane as a helical segment; it reads FTMNLLVLLCQCSVGVAMVYA. At 112–129 the chain is on the cytoplasmic side; that stretch reads AKCMGWIQIRTLNMRDVK. A helical membrane pass occupies residues 130 to 150; that stretch reads TWFPISTMLVFVIYTGSKALQ. The Lumenal segment spans residues 151–155; sequence HMDIP. A helical transmembrane segment spans residues 156–176; it reads IYTIFKNLTIILIAYGELLWF. Topologically, residues 177–179 are cytoplasmic; the sequence is NGR. A helical membrane pass occupies residues 180 to 200; that stretch reads ITPMVFLSFILMVLSSIIAAW. The Lumenal portion of the chain corresponds to 201–287; the sequence is PDLAPSTAKT…ASSSTLSSWS (87 aa). Residues 288-308 form a helical membrane-spanning segment; sequence TNGYVWMLANCMISATYVLVM. Residues 309-321 are Cytoplasmic-facing; sequence RKRIKLTGFKDWD. The chain crosses the membrane as a helical span at residues 322 to 342; it reads TMFYNNLLSIPVLLFMSLLVE. Residue Asn343 is glycosylated (N-linked (GlcNAc...) asparagine). Topologically, residues 343–360 are lumenal; it reads NWSVETFEHNFPREKRST. Residues 361 to 381 traverse the membrane as a helical segment; it reads LVFAILLSGTGGVFISYTTAW. Residues 382–390 lie on the Cytoplasmic side of the membrane; it reads CIRVTSSTT. Residues 391 to 411 traverse the membrane as a helical segment; the sequence is YSMVGALNKLPLALSGMLFFG. Residues 412 to 413 are Lumenal-facing; it reads NP. Residues 414–434 traverse the membrane as a helical segment; it reads VTPYNSIGVAVGFIAGIVYAV. Residues 435–484 are Cytoplasmic-facing; it reads GKYKQVVAARIANSDATGASTSLSSSSSAAPSGEYVFDLKGEIPTHTRQQ.

It belongs to the TPT transporter family. SLC35D subfamily. Homooligomer.

It localises to the golgi apparatus membrane. Its subcellular location is the cytoplasmic vesicle membrane. The protein localises to the endoplasmic reticulum membrane. In terms of biological role, involved in the import of GDP-mannose from the cytoplasm into the Golgi lumen. In Malassezia globosa (strain ATCC MYA-4612 / CBS 7966) (Dandruff-associated fungus), this protein is GDP-mannose transporter (VRG4).